Reading from the N-terminus, the 500-residue chain is Proline/betaine transporter (500 aa).

Over 1-37 (MLKRKKVKPITLRDVTIIDDGKLRKAITAASLGNAME) the chain is Cytoplasmic. A helical membrane pass occupies residues 38 to 58 (WFDFGVYGFVAYALGKVFFPG). Topologically, residues 59 to 65 (ADPSVQM) are periplasmic. A helical transmembrane segment spans residues 66–86 (VAALATFSVPFLIRPLGGLFF). Topologically, residues 87-97 (GMLGDKYGRQK) are cytoplasmic. The helical transmembrane segment at 98-118 (ILAITIVIMSISTFCIGLIPS) threads the bilayer. The Periplasmic segment spans residues 119–121 (YDT). A helical membrane pass occupies residues 122–142 (IGIWAPILLLICKMAQGFSVG). At 143–169 (GEYTGASIFVAEYSPDRKRGFMGSWLD) the chain is on the cytoplasmic side. A helical transmembrane segment spans residues 170 to 190 (FGSIAGFVLGAGVVVLISTIV). Over 191-194 (GEAN) the chain is Periplasmic. The helical transmembrane segment at 195-215 (FLDWGWRIPFFIALPLGIIGL) threads the bilayer. At 216–260 (YLRHALEETPAFQQHVDKLEQGDREGLQDGPKVSFKEIATKYWRS) the chain is on the cytoplasmic side. Residues 261–281 (LLTCIGLVIATNVTYYMLLTY) traverse the membrane as a helical segment. Residues 282–297 (MPSYLSHNLHYSEDHG) lie on the Periplasmic side of the membrane. A helical membrane pass occupies residues 298-318 (VLIIIAIMIGMLFVQPVMGLL). At 319–325 (SDRFGRR) the chain is on the cytoplasmic side. Residues 326–346 (PFVLLGSVALFVLAIPAFILI) form a helical membrane-spanning segment. Residues 347–350 (NSNV) are Periplasmic-facing. A helical membrane pass occupies residues 351–371 (IGLIFAGLLMLAVILNCFTGV). The Cytoplasmic portion of the chain corresponds to 372–390 (MASTLPAMFPTHIRYSALA). The helical transmembrane segment at 391–411 (AAFNISVLVAGLTPTLAAWLV) threads the bilayer. The Periplasmic portion of the chain corresponds to 412–416 (ESSQN). Residues 417–437 (LMMPAYYLMVVAVVGLITGVT) traverse the membrane as a helical segment. Residues 438-500 (MKETANRPLK…LVQQHPRIDE (63 aa)) lie on the Cytoplasmic side of the membrane. Residues 453-498 (ASDIQEAKEILVEHYDNIEQKIDDIDHEIADLQAKRTRLVQQHPRI) are a coiled coil.

The protein belongs to the major facilitator superfamily. Metabolite:H+ Symporter (MHS) family (TC 2.A.1.6) family.

The protein resides in the cell inner membrane. In terms of biological role, proton symporter that senses osmotic shifts and responds by importing osmolytes such as proline, glycine betaine, stachydrine, pipecolic acid, ectoine and taurine. It is both an osmosensor and an osmoregulator which is available to participate early in the bacterial osmoregulatory response. The sequence is that of Proline/betaine transporter (proP) from Escherichia coli O157:H7.